A 290-amino-acid polypeptide reads, in one-letter code: Nucleotide-binding protein Clos_0574 (290 aa).

8–15 (GLSGAGKS) provides a ligand contact to ATP. 59 to 62 (DIRG) is a GTP binding site.

The protein belongs to the RapZ-like family.

Its function is as follows. Displays ATPase and GTPase activities. The polypeptide is Nucleotide-binding protein Clos_0574 (Alkaliphilus oremlandii (strain OhILAs) (Clostridium oremlandii (strain OhILAs))).